Consider the following 1378-residue polypeptide: MSLLMFTQLLLCGFLYVRVDGSRLRQEDFPPRIVEHPSDVIVSKGEPTTLNCKAEGRPTPTIEWYKDGERVETDKDDPRSHRMLLPSGSLFFLRIVHGRRSKPDEGSYVCVARNYLGEAVSRNASLEVALLRDDFRQNPTDVVVAAGEPAILECQPPRGHPEPTIYWKKDKVRIDDKEERISIRGGKLMISNTRKSDAGMYTCVGTNMVGERDSDPAELTVFERPTFLRRPINQVVLEEEAVEFRCQVQGDPQPTVRWKKDDADLPRGRYDIKDDYTLRIKKTMSTDEGTYMCIAENRVGKMEASATLTVRAPPQFVVRPRDQIVAQGRTVTFPCETKGNPQPAVFWQKEGSQNLLFPNQPQQPNSRCSVSPTGDLTITNIQRSDAGYYICQALTVAGSILAKAQLEVTDVLTDRPPPIILQGPANQTLAVDGTALLKCKATGDPLPVISWLKEGFTFPGRDPRATIQEQGTLQIKNLRISDTGTYTCVATSSSGETSWSAVLDVTESGATISKNYDLSDLPGPPSKPQVTDVTKNSVTLSWQPGTPGTLPASAYIIEAFSQSVSNSWQTVANHVKTTLYTVRGLRPNTIYLFMVRAINPQGLSDPSPMSDPVRTQDISPPAQGVDHRQVQKELGDVLVRLHNPVVLTPTTVQVTWTVDRQPQFIQGYRVMYRQTSGLQATSSWQNLDAKVPTERSAVLVNLKKGVTYEIKVRPYFNEFQGMDSESKTVRTTEEAPSAPPQSVTVLTVGSYNSTSISVSWDPPPPDHQNGIIQEYKIWCLGNETRFHINKTVDAAIRSVIIGGLFPGIQYRVEVAASTSAGVGVKSEPQPIIIGRRNEVVITENNNSITEQITDVVKQPAFIAGIGGACWVILMGFSIWLYWRRKKRKGLSNYAVTFQRGDGGLMSNGSRPGLLNAGDPSYPWLADSWPATSLPVNNSNSGPNEIGNFGRGDVLPPVPGQGDKTATMLSDGAIYSSIDFTTKTSYNSSSQITQATPYATTQILHSNSIHELAVDLPDPQWKSSIQQKTDLMGFGYSLPDQNKGNNGGKGGKKKKNKNSSKPQKNNGSTWANVPLPPPPVQPLPGTELEHYAVEQQENGYDSDSWCPPLPVQTYLHQGLEDELEEDDDRVPTPPVRGVASSPAISFGQQSTATLTPSPREEMQPMLQAHLDELTRAYQFDIAKQTWHIQSNNQPPQPPVPPLGYVSGALISDLETDVADDDADDEEEALEIPRPLRALDQTPGSSMDNLDSSVTGKAFTSSQRPRPTSPFSTDSNTSAALSQSQRPRPTKKHKGGRMDQQPALPHRREGMTDEEALVPYSKPSFPSPGGHSSSGTASSKGSTGPRKTEVLRAGHQRNASDLLDIGYMGSNSQGQFTGEL.

Residues 1–21 form the signal peptide; sequence MSLLMFTQLLLCGFLYVRVDG. Over 22–859 the chain is Extracellular; that stretch reads SRLRQEDFPP…EQITDVVKQP (838 aa). 5 Ig-like C2-type domains span residues 31-127, 133-220, 225-309, 314-409, and 418-504; these read PRIV…ASLE, DDFR…AELT, PTFL…ATLT, PQFV…LEVT, and PIIL…AVLD. Cys-52 and Cys-110 are disulfide-bonded. Asn-123 carries an N-linked (GlcNAc...) asparagine glycan. Disulfide bonds link Cys-154–Cys-203, Cys-246–Cys-293, and Cys-335–Cys-391. The N-linked (GlcNAc...) asparagine glycan is linked to Asn-426. A disulfide bond links Cys-439 and Cys-488. Fibronectin type-III domains lie at 524-618, 637-735, and 739-836; these read PPSK…TQDI, VLVR…TEEA, and PPQS…IGRR. The tract at residues 603–625 is disordered; it reads LSDPSPMSDPVRTQDISPPAQGV. Asn-752, Asn-782, Asn-789, and Asn-845 each carry an N-linked (GlcNAc...) asparagine glycan. Residues 860 to 880 form a helical membrane-spanning segment; that stretch reads AFIAGIGGACWVILMGFSIWL. At 881–1378 the chain is on the cytoplasmic side; the sequence is YWRRKKRKGL…NSQGQFTGEL (498 aa). Disordered stretches follow at residues 1032–1084, 1124–1156, and 1215–1348; these read GFGY…PLPG, EDDD…LTPS, and DVAD…KTEV. A compositionally biased stretch (low complexity) spans 1058 to 1067; the sequence is SSKPQKNNGS. The span at 1141-1155 shows a compositional bias: polar residues; it reads PAISFGQQSTATLTP. Thr-1154 carries the post-translational modification Phosphothreonine. Residue Ser-1156 is modified to Phosphoserine. Acidic residues predominate over residues 1215–1228; the sequence is DVADDDADDEEEAL. The span at 1240–1285 shows a compositional bias: polar residues; the sequence is TPGSSMDNLDSSVTGKAFTSSQRPRPTSPFSTDSNTSAALSQSQRP. Low complexity predominate over residues 1319 to 1343; sequence SKPSFPSPGGHSSSGTASSKGSTGP.

The protein belongs to the immunoglobulin superfamily. ROBO family. As to quaternary structure, interacts with SLIT2.

The protein localises to the membrane. Its function is as follows. Receptor for SLIT2, and probably SLIT1, which are thought to act as molecular guidance cue in cellular migration, including axonal navigation at the ventral midline of the neural tube and projection of axons to different regions during neuronal development. This is Roundabout homolog 2 (ROBO2) from Homo sapiens (Human).